The chain runs to 359 residues: DNA-directed RNA polymerase RPB3-11 homolog (359 aa).

The protein in the N-terminal section; belongs to the archaeal RpoD/eukaryotic RPB3 RNA polymerase subunit family. In the C-terminal section; belongs to the archaeal RpoL/eukaryotic RPB11/RPC19 RNA polymerase subunit family. Part of the viral DNA-directed RNA polymerase that consists of 8 polII-like subunits (RPB1, RPB2, RPB3, RPB5, RPB6, RPB7, RPB9, RPB10), a capping enzyme and a termination factor.

Its subcellular location is the host cytoplasm. It is found in the virion. Functionally, component of the DNA-directed RNA polymerase (RNAP) that catalyzes the transcription in the cytoplasm of viral DNA into RNA using the four ribonucleoside triphosphates as substrates. In Ornithodoros (relapsing fever ticks), this protein is DNA-directed RNA polymerase RPB3-11 homolog.